The chain runs to 211 residues: MLTIALPKGALLKDSVAYFQRLGLNFEALLEPANRQLQVLSQDGRARALLVRAQDVPVYVQYGQAQLGIVGYDVLREKNPHVAKLADLGFGQCRLSVAVKASSPYRSARDLPPHCRVASKFVRCADAFFQQLDLPVDIVPLYGSVELGPITGMAEAIVDLVSTGRTLKENGLVEIEQIFSSTAYLIAHPRSYRLNLNGLGHYVPQLTGAIA.

Belongs to the ATP phosphoribosyltransferase family. Short subfamily. Heteromultimer composed of HisG and HisZ subunits.

The protein resides in the cytoplasm. It catalyses the reaction 1-(5-phospho-beta-D-ribosyl)-ATP + diphosphate = 5-phospho-alpha-D-ribose 1-diphosphate + ATP. The protein operates within amino-acid biosynthesis; L-histidine biosynthesis; L-histidine from 5-phospho-alpha-D-ribose 1-diphosphate: step 1/9. Functionally, catalyzes the condensation of ATP and 5-phosphoribose 1-diphosphate to form N'-(5'-phosphoribosyl)-ATP (PR-ATP). Has a crucial role in the pathway because the rate of histidine biosynthesis seems to be controlled primarily by regulation of HisG enzymatic activity. This Thermosynechococcus vestitus (strain NIES-2133 / IAM M-273 / BP-1) protein is ATP phosphoribosyltransferase.